A 406-amino-acid chain; its full sequence is Protein PHYTOCHROME KINASE SUBSTRATE 4 (406 aa).

A compositionally biased stretch (polar residues) spans 106 to 119 (SWNSQTGLLSNKNR). Residues 106-133 (SWNSQTGLLSNKNRQGSDRDGRRSSKKG) are disordered.

It belongs to the PKS family. Interacts in vitro with PHYA and PHYB. As to expression, expressed in the hypocotyl elongation zone. Not found in the root elongation zone.

Functionally, modulates phytochrome-mediated control of hypocotyl growth orientation. Involved in PHYA and PHYB signaling. Acts as an inhibitor of asymmetric growth. Not involved in the control of leaf flattening. This chain is Protein PHYTOCHROME KINASE SUBSTRATE 4 (PKS4), found in Arabidopsis thaliana (Mouse-ear cress).